The chain runs to 20 residues: Fibrinogen beta chain (20 aa).

Residues 1 to 12 are compositionally biased toward acidic residues; that stretch reads IIDYYDEGEEDR. The interval 1-20 is disordered; that stretch reads IIDYYDEGEEDRDVGVVDAR.

As to quaternary structure, heterohexamer; disulfide linked. Contains 2 sets of 3 non-identical chains (alpha, beta and gamma). The 2 heterotrimers are in head to head conformation with the N-termini in a small central domain. In terms of processing, conversion of fibrinogen to fibrin is triggered by thrombin, which cleaves fibrinopeptides A and B from alpha and beta chains, and thus exposes the N-terminal polymerization sites responsible for the formation of the soft clot.

It localises to the secreted. Its function is as follows. Cleaved by the protease thrombin to yield monomers which, together with fibrinogen alpha (FGA) and fibrinogen gamma (FGG), polymerize to form an insoluble fibrin matrix. Fibrin has a major function in hemostasis as one of the primary components of blood clots. In addition, functions during the early stages of wound repair to stabilize the lesion and guide cell migration during re-epithelialization. Was originally thought to be essential for platelet aggregation, based on in vitro studies using anticoagulated blood. However subsequent studies have shown that it is not absolutely required for thrombus formation in vivo. Enhances expression of SELP in activated platelets. Maternal fibrinogen is essential for successful pregnancy. Fibrin deposition is also associated with infection, where it protects against IFNG-mediated hemorrhage. May also facilitate the antibacterial immune response via both innate and T-cell mediated pathways. This chain is Fibrinogen beta chain (FGB), found in Felis catus (Cat).